The primary structure comprises 49 residues: Large ribosomal subunit protein bL32 (49 aa).

The protein belongs to the bacterial ribosomal protein bL32 family.

The sequence is that of Large ribosomal subunit protein bL32 from Nitratiruptor sp. (strain SB155-2).